Here is a 389-residue protein sequence, read N- to C-terminus: Large envelope protein (389 aa).

The residue at position 1 (Met1) is an N-acetylmethionine. Gly2 carries the N-myristoyl glycine; by host lipid modification. The tract at residues 2-108 (GQNLSTSNPL…PPLRTTHPQA (107 aa)) is pre-S1. The pre-S stretch occupies residues 2–163 (GQNLSTSNPL…SSRIGDPALN (162 aa)). Over 2-170 (GQNLSTSNPL…ALNMENITSG (169 aa)) the chain is Virion surface; in external conformation. Over 2 to 242 (GQNLSTSNPL…VGYRWMCLRR (241 aa)) the chain is Intravirion; in internal conformation. Disordered stretches follow at residues 76-102 (TLPA…PPLR) and 133-154 (GGSS…LSTS). Residues 85–95 (STNRQSGRQPT) are compositionally biased toward polar residues. The interval 109 to 163 (MQWNSTTFHQTLQDPRVRGLYLPAGGSSSGTVNPVPTTASPTLSTSSRIGDPALN) is pre-S2. Low complexity predominate over residues 142–154 (PVPTTASPTLSTS). A helical transmembrane segment spans residues 171-191 (FLGPLLVLQAGFFLLTRILTI). Over 192–242 (PQSLDSWWTSLSFLGGTTVCLGQNSQSPTSNHSPTSCPPTCVGYRWMCLRR) the chain is Intravirion; in external conformation. The chain crosses the membrane as a helical span at residues 243–263 (FIIFLFILLLCLIFLLVLLDY). At 264-337 (QGMLPVCPLI…WASARFSWLS (74 aa)) the chain is on the virion surface side. Asn309 is a glycosylation site (N-linked (GlcNAc...) asparagine; by host). Residues 338–358 (LLVPFVQWFVGLSPTVWLSVI) form a helical membrane-spanning segment. Over 359 to 364 (WMMWYW) the chain is Intravirion. The chain crosses the membrane as a helical span at residues 365 to 387 (GPSLYNTLSPFLPLLPIFFYLWV). At 388–389 (YI) the chain is on the virion surface side.

It belongs to the orthohepadnavirus major surface antigen family. In terms of assembly, in its internal form (Li-HBsAg), interacts with the capsid protein and with the isoform S. Interacts with host chaperone CANX. Associates with host chaperone CANX through its pre-S2 N glycan; this association may be essential for isoform M proper secretion. As to quaternary structure, interacts with isoform L. Interacts with the antigens of satellite virus HDV (HDVAgs); this interaction is required for encapsidation of HDV genomic RNA. Post-translationally, isoform M is N-terminally acetylated by host at a ratio of 90%, and N-glycosylated by host at the pre-S2 region. In terms of processing, myristoylated.

The protein resides in the virion membrane. Its function is as follows. The large envelope protein exists in two topological conformations, one which is termed 'external' or Le-HBsAg and the other 'internal' or Li-HBsAg. In its external conformation the protein attaches the virus to cell receptors and thereby initiating infection. This interaction determines the species specificity and liver tropism. This attachment induces virion internalization predominantly through caveolin-mediated endocytosis. The large envelope protein also assures fusion between virion membrane and endosomal membrane. In its internal conformation the protein plays a role in virion morphogenesis and mediates the contact with the nucleocapsid like a matrix protein. Functionally, the middle envelope protein plays an important role in the budding of the virion. It is involved in the induction of budding in a nucleocapsid independent way. In this process the majority of envelope proteins bud to form subviral lipoprotein particles of 22 nm of diameter that do not contain a nucleocapsid. In Homo sapiens (Human), this protein is Large envelope protein.